Reading from the N-terminus, the 226-residue chain is Cytidylate kinase (226 aa).

10–18 (GPASSGKST) provides a ligand contact to ATP.

The protein belongs to the cytidylate kinase family. Type 1 subfamily.

The protein resides in the cytoplasm. It catalyses the reaction CMP + ATP = CDP + ADP. It carries out the reaction dCMP + ATP = dCDP + ADP. The protein is Cytidylate kinase of Streptococcus pyogenes serotype M18 (strain MGAS8232).